Here is an 858-residue protein sequence, read N- to C-terminus: Elongation factor 2 (858 aa).

One can recognise a tr-type G domain in the interval 17 to 362; that stretch reads ANIRNMSVIA…MITIHLPSPV (346 aa). 26-33 provides a ligand contact to GTP; sequence AHVDHGKS. The residue at position 54 (Thr-54) is a Phosphothreonine. Thr-57 carries the phosphothreonine; by EEF2K modification. Phosphothreonine is present on Thr-59. Residue Lys-152 is modified to N6-succinyllysine. Residues 158 to 161 and 216 to 218 each bind GTP; these read NKMD and SGL. Lys-235 is subject to N6-acetyllysine. The residue at position 239 (Lys-239) is an N6-acetyllysine; alternate. Lys-239 is covalently cross-linked (Glycyl lysine isopeptide (Lys-Gly) (interchain with G-Cter in SUMO1); alternate). Phosphotyrosine; by CSK is present on Tyr-265. Residue Lys-272 is modified to N6-acetyllysine; alternate. Position 272 is an N6-succinyllysine; alternate (Lys-272). Residue Lys-275 is modified to N6-acetyllysine. Lys-322 is covalently cross-linked (Glycyl lysine isopeptide (Lys-Gly) (interchain with G-Cter in SUMO)). Ser-325 is modified (phosphoserine). The residue at position 373 (Tyr-373) is a Phosphotyrosine; by CSK. Thr-435 is subject to Phosphothreonine. N6-acetyllysine is present on residues Lys-439 and Lys-445. Position 502 is a phosphoserine (Ser-502). At Lys-525 the chain carries N6,N6,N6-trimethyllysine; by EEF2KMT. Lys-529 participates in a covalent cross-link: Glycyl lysine isopeptide (Lys-Gly) (interchain with G-Cter in SUMO). Lys-572 carries the N6-succinyllysine modification. Ser-595 is subject to Phosphoserine; by CDK2. N6-acetyllysine is present on Lys-619. His-715 carries the post-translational modification Diphthamide.

Belongs to the TRAFAC class translation factor GTPase superfamily. Classic translation factor GTPase family. EF-G/EF-2 subfamily. As to quaternary structure, binds to 80S ribosomes. Actively translating ribosomes show mutually exclusive binding of eIF5a (EIF5A or EIF5A2) and EEF2/eEF2. Interacts with SERBP1; interaction sequesters EEF2/eEF2 at the A-site of the ribosome, thereby blocking the interaction sites of the mRNA-tRNA complex, promoting ribosome stabilization and hibernation. Interacts with HABP4; interaction takes place at the A-site of hibernating ribosomes and promotes ribosome stabilization. Component of the mRNA surveillance SURF complex, at least composed of ERF1, ERF3 (ERF3A or ERF3B), EEF2, UPF1/RENT1, SMG1, SMG8 and SMG9. Interacts with RBPMS2. Phosphorylation by EF-2 kinase completely inactivates EF-2; it requires prior phosphorylation by CDK2 at Ser-595 during mitotic prometaphase. Phosphorylation by CSK promotes SUMOylation, proteolytic cleavage, and nuclear translocation if the C-terminal fragment. In terms of processing, diphthamide is 2-[3-carboxyamido-3-(trimethyl-ammonio)propyl]histidine. Post-translationally, ISGylated. Proteolytically processed at two sites following phosphorylation by CSK. In terms of processing, SUMOylated following phosphorylation by CSK, promotes proteolytic cleavage.

It is found in the cytoplasm. The protein resides in the nucleus. It catalyses the reaction GTP + H2O = GDP + phosphate + H(+). Catalyzes the GTP-dependent ribosomal translocation step during translation elongation. During this step, the ribosome changes from the pre-translocational (PRE) to the post-translocational (POST) state as the newly formed A-site-bound peptidyl-tRNA and P-site-bound deacylated tRNA move to the P and E sites, respectively. Catalyzes the coordinated movement of the two tRNA molecules, the mRNA and conformational changes in the ribosome. This Pongo abelii (Sumatran orangutan) protein is Elongation factor 2 (EEF2).